The primary structure comprises 1937 residues: Myosin-2 (1937 aa).

A Myosin N-terminal SH3-like domain is found at D33–P82. Residues T64 and T69 each carry the phosphothreonine modification. Residues D86–D780 enclose the Myosin motor domain. An N6,N6,N6-trimethyllysine modification is found at K130. Residue G179–T186 coordinates ATP. Y387 is modified (phosphotyrosine). Phosphothreonine is present on T417. Residue S623 is modified to Phosphoserine. An actin-binding region spans residues L657–E679. Pros-methylhistidine is present on H755. An actin-binding region spans residues K759 to G773. The IQ domain occupies L783–S812. Residues L841 to E1937 adopt a coiled-coil conformation. S1094 carries the phosphoserine modification. Disordered stretches follow at residues I1124 to L1145 and R1151 to E1170. Residues A1126 to L1145 show a composition bias toward basic and acidic residues. S1160 and S1235 each carry phosphoserine. At T1239 the chain carries Phosphothreonine. S1241 carries the phosphoserine modification. At T1253 the chain carries Phosphothreonine. Residue S1259 is modified to Phosphoserine. T1284 bears the Phosphothreonine mark. Residues S1290, S1301, and S1304 each carry the phosphoserine modification. Y1462 is modified (phosphotyrosine). T1465 is subject to Phosphothreonine. S1472 carries the post-translational modification Phosphoserine. Y1490 carries the post-translational modification Phosphotyrosine. Position 1493 is a phosphoserine (S1493). The residue at position 1499 (T1499) is a Phosphothreonine. The residue at position 1512 (S1512) is a Phosphoserine. T1515 is subject to Phosphothreonine. A phosphoserine mark is found at S1540, S1552, S1572, S1712, and S1724. Phosphothreonine occurs at positions 1728 and 1734. S1737 carries the phosphoserine modification. A disordered region spans residues Q1883 to D1913.

The protein belongs to the TRAFAC class myosin-kinesin ATPase superfamily. Myosin family. Muscle myosin is a hexameric protein that consists of 2 heavy chain subunits (MHC), 2 alkali light chain subunits (MLC) and 2 regulatory light chain subunits (MLC-2). Interacts with GCSAM.

The protein resides in the cytoplasm. It is found in the myofibril. Functionally, myosins are actin-based motor molecules with ATPase activity essential for muscle contraction. The chain is Myosin-2 (MYH2) from Equus caballus (Horse).